The following is a 371-amino-acid chain: Methionine import ATP-binding protein MetN (371 aa).

Residues 1-22 form a disordered region; sequence MSEPFMNAPWQPPGDHPALKSP. The region spanning 27–268 is the ABC transporter domain; the sequence is ILIDSVRKLY…PRHEVTRRFV (242 aa). 65–72 is a binding site for ATP; sequence GRSGAGKS.

This sequence belongs to the ABC transporter superfamily. Methionine importer (TC 3.A.1.24) family. As to quaternary structure, the complex is composed of two ATP-binding proteins (MetN), two transmembrane proteins (MetI) and a solute-binding protein (MetQ).

The protein resides in the cell inner membrane. The enzyme catalyses L-methionine(out) + ATP + H2O = L-methionine(in) + ADP + phosphate + H(+). The catalysed reaction is D-methionine(out) + ATP + H2O = D-methionine(in) + ADP + phosphate + H(+). Part of the ABC transporter complex MetNIQ involved in methionine import. Responsible for energy coupling to the transport system. This Rhodopseudomonas palustris (strain BisB5) protein is Methionine import ATP-binding protein MetN.